A 429-amino-acid polypeptide reads, in one-letter code: Type II methyltransferase M.AgeI (429 aa).

Positions 1–429 constitute an SAM-dependent MTase C5-type domain; it reads MKTIDLFCGA…MAETIKVAIS (429 aa). The active site involves cysteine 80.

Belongs to the class I-like SAM-binding methyltransferase superfamily. C5-methyltransferase family.

It carries out the reaction a 2'-deoxycytidine in DNA + S-adenosyl-L-methionine = a 5-methyl-2'-deoxycytidine in DNA + S-adenosyl-L-homocysteine + H(+). Functionally, a methylase, recognizes the double-stranded sequence 5'-ACCGGT-3', methylates C-3 on both strands, and protects the DNA from cleavage by the AgeI endonuclease. The protein is Type II methyltransferase M.AgeI (ageIM) of Thalassovita gelatinovora (Thalassobius gelatinovorus).